The following is an 80-amino-acid chain: Small ribosomal subunit protein bS18c (80 aa).

The span at 1–19 (MKKFISRPKRSSRRRKKTP) shows a compositional bias: basic residues. The disordered stretch occupies residues 1–24 (MKKFISRPKRSSRRRKKTPIKPGE).

This sequence belongs to the bacterial ribosomal protein bS18 family. As to quaternary structure, part of the 30S ribosomal subunit.

It is found in the plastid. The protein resides in the chloroplast. This is Small ribosomal subunit protein bS18c from Staurastrum punctulatum (Green alga).